A 422-amino-acid chain; its full sequence is Aspartate--tRNA(Asp/Asn) ligase (422 aa).

L-aspartate is bound at residue E158. An aspartate region spans residues 180 to 183; the sequence is QLYK. R201 is an L-aspartate binding site. Residues 201–203, 209–211, and E345 contribute to the ATP site; these read RME and RHL. The L-aspartate site is built by S348 and R352. Residue 393-396 participates in ATP binding; sequence GAER.

Belongs to the class-II aminoacyl-tRNA synthetase family. Type 2 subfamily. In terms of assembly, homodimer. Makes part of a ribonucleoprotein particle (RNP) called transamidosome that allows channelling of the aa-tRNA from non-discriminating aspartyl-tRNA synthetase active site to the GatCAB amidotransferase site. The transamidosome complex is formed by two GatCABs, one dimeric ND-AspRSs and two tRNAs(Asn) molecules.

Its subcellular location is the cytoplasm. The enzyme catalyses tRNA(Asx) + L-aspartate + ATP = L-aspartyl-tRNA(Asx) + AMP + diphosphate. In terms of biological role, aspartyl-tRNA synthetase with relaxed tRNA specificity since it is able to aspartylate not only its cognate tRNA(Asp) but also tRNA(Asn) with similar efficiencies. Reaction proceeds in two steps: L-aspartate is first activated by ATP to form Asp-AMP and then transferred to the acceptor end of tRNA(Asp/Asn). The polypeptide is Aspartate--tRNA(Asp/Asn) ligase (aspS2) (Thermus thermophilus (strain ATCC 27634 / DSM 579 / HB8)).